A 65-amino-acid polypeptide reads, in one-letter code: UPF0434 protein Mpe_A2486 (65 aa).

Belongs to the UPF0434 family.

The chain is UPF0434 protein Mpe_A2486 from Methylibium petroleiphilum (strain ATCC BAA-1232 / LMG 22953 / PM1).